Consider the following 315-residue polypeptide: Atrochrysone carboxyl ACP thioesterase (315 aa).

Residues His95, His97, Asp99, and His100 each coordinate Zn(2+). Asp99 serves as the catalytic Proton donor/acceptor.

This sequence belongs to the metallo-beta-lactamase superfamily. The cofactor is Zn(2+). As to expression, endocrocin is specifically produced in conidia.

It catalyses the reaction atrochrysone carboxyl-[ACP] + H2O = atrochrysone carboxylate + holo-[ACP] + H(+). Its function is as follows. Atrochrysone carboxyl ACP thioesterase; part of the gene cluster that mediates the biosynthesis of endocrocin, a simple anthraquinone interesting for many biotechnological applications. The pathway begins with the synthesis of atrochrysone thioester by the polyketide synthase (PKS) encA. The atrochrysone carboxyl ACP thioesterase encB then breaks the thioester bond and releases the atrochrysone carboxylic acid from encA. The atrochrysone carboxylic acid is then converted to endocrocin anthrone which is further oxidized into endocrocin by the anthrone oxygenase encC. The exact function of encD has not been identified yet, but it negatively regulates endocrocin production, likely through the modification of endocrocin itself. The polypeptide is Atrochrysone carboxyl ACP thioesterase (Aspergillus fumigatus (strain ATCC MYA-4609 / CBS 101355 / FGSC A1100 / Af293) (Neosartorya fumigata)).